A 228-amino-acid chain; its full sequence is UPF0173 metal-dependent hydrolase ABC2731 (228 aa).

It belongs to the UPF0173 family.

The polypeptide is UPF0173 metal-dependent hydrolase ABC2731 (Shouchella clausii (strain KSM-K16) (Alkalihalobacillus clausii)).